Consider the following 180-residue polypeptide: ATP synthase subunit b, plastid (180 aa).

Residues 27-49 traverse the membrane as a helical segment; the sequence is LVTTLINIAVVLSLLIVFGKGFL.

Belongs to the ATPase B chain family. F-type ATPases have 2 components, F(1) - the catalytic core - and F(0) - the membrane proton channel. F(1) has five subunits: alpha(3), beta(3), gamma(1), delta(1), epsilon(1). F(0) has four main subunits: a(1), b(1), b'(1) and c(10-14). The alpha and beta chains form an alternating ring which encloses part of the gamma chain. F(1) is attached to F(0) by a central stalk formed by the gamma and epsilon chains, while a peripheral stalk is formed by the delta, b and b' chains.

The protein resides in the plastid membrane. In terms of biological role, f(1)F(0) ATP synthase produces ATP from ADP in the presence of a proton or sodium gradient. F-type ATPases consist of two structural domains, F(1) containing the extramembraneous catalytic core and F(0) containing the membrane proton channel, linked together by a central stalk and a peripheral stalk. During catalysis, ATP synthesis in the catalytic domain of F(1) is coupled via a rotary mechanism of the central stalk subunits to proton translocation. Component of the F(0) channel, it forms part of the peripheral stalk, linking F(1) to F(0). In Cuscuta gronovii (Common dodder), this protein is ATP synthase subunit b, plastid.